Consider the following 940-residue polypeptide: MLPLLGLCFALPLCAGLLEEARSWEDTSDQVGLRIPRQVRLLQRLKTKPLMTEFSVKSTIISRYAFTTVACRMLNRGSEDQEVTFQMQIPAAAFITNFTALIGDKVYQGEITEREKRNGDKVKEKRNKTIEDNGEKGTETFRASAVLPSKDKAAFLLSYEELLQRRLGKYEHVVSVRPQQLVGRLTVEVTVLERPGIAELEVLGLQNSRQRGSGRGPDDSGPPPSTVINQNETFAKVVFKPSVVQQAKIAQNGILGDFIVRYDVNREQSIGDIQVLDGYFVHYFAPKDLPPLPKNVVFVLDSSASMVGTKLRQTKDALFTILHDLRPQDHFNIVGFSNRIKVWKDHLVSVTPNSIRDGKVYIHHMSPSGGTDINGALQRGIQLLNDYVAHNDIEDRSVSLVVFLTDGKPTVGETHTFKILNNTREATRGRVCIFTVGIGADVDFKLLEKLSLENCGLTRRVHEDHDARAQLIGFYDEIRTPLLSDIRVDYPPSLVERATRTLFPNYFNGSEIVIAGKLVDRAMDRLHVEVTASNSKKFVVLKKDVPVEPRKVGIDVSQSPRPRGRGQEEPNHLERLWSYLTLKELLSAWLQSIEEPERERLRQEAQALAVNHHFLIPFTSMTLKSAPRTEAPEAAYGMSSTSMATGPETVMQSLRGTHLQPGPAVKKPYNPRIKISKTSADGDPHFVVDFPLSNLTVCFNIDGEPGHILRLVSDHADSGVTVNGELIGAPAPPNGHKKQRTYFRTITILVNKPERSYLEITPSRVIVDGGDRLVLPCNQSAVVGRRGLEVSVSANASVTISIQGTVAFVVLLHLYKKPAPYQRNHLGFYIANGQGLSSNCHGLLGQFLNQEARLIGLSKSPAHPPVPEAGERSEAVLEVKGRQVPVVWKQRRIYNGEEQVDCWFARNNAAGLIDGEYKGYLAAHPFDSETAFGPGLSQGL.

The first 16 residues, 1 to 16, serve as a signal peptide directing secretion; that stretch reads MLPLLGLCFALPLCAG. The VIT domain occupies 35–161; it reads IPRQVRLLQR…KAAFLLSYEE (127 aa). 2 N-linked (GlcNAc...) asparagine glycosylation sites follow: Asn-97 and Asn-127. A disordered region spans residues 207 to 227; it reads NSRQRGSGRGPDDSGPPPSTV. Asn-231, Asn-421, Asn-508, Asn-694, Asn-778, and Asn-795 each carry an N-linked (GlcNAc...) asparagine glycan. Positions 295–478 constitute a VWFA domain; sequence NVVFVLDSSA…AQLIGFYDEI (184 aa).

The protein belongs to the ITIH family.

The protein resides in the secreted. In terms of biological role, may act as a tumor suppressor. The protein is Inter-alpha-trypsin inhibitor heavy chain H5 (ITIH5) of Bos taurus (Bovine).